The following is a 294-amino-acid chain: 33 kDa chaperonin (294 aa).

Cystine bridges form between Cys-239–Cys-241 and Cys-272–Cys-275.

This sequence belongs to the HSP33 family. Post-translationally, under oxidizing conditions two disulfide bonds are formed involving the reactive cysteines. Under reducing conditions zinc is bound to the reactive cysteines and the protein is inactive.

It localises to the cytoplasm. Its function is as follows. Redox regulated molecular chaperone. Protects both thermally unfolding and oxidatively damaged proteins from irreversible aggregation. Plays an important role in the bacterial defense system toward oxidative stress. The sequence is that of 33 kDa chaperonin from Listeria monocytogenes serovar 1/2a (strain ATCC BAA-679 / EGD-e).